Consider the following 546-residue polypeptide: Peroxisomal OPC-8:0-CoA ligase 1 (546 aa).

The ATP site is built by Ser197, Ser198, Gly199, Thr200, Thr201, and Lys205. Lys265 serves as a coordination point for CoA. An SBD1 region spans residues 267–338; sequence EMHEMMSAIG…EKYPTVKILQ (72 aa). 5 residues coordinate ATP: Gln338, Gly339, Thr343, Asp424, and Arg439. The tract at residues 339–403 is SBD2; sequence GYGLTESTGI…LKGPSIMKGY (65 aa). Residues Lys447 and Gly448 each coordinate CoA. Lys530 provides a ligand contact to ATP. Residues 544–546 carry the Microbody targeting signal motif; it reads SKL.

It belongs to the ATP-dependent AMP-binding enzyme family. Mg(2+) is required as a cofactor. As to expression, expressed at low levels in seedlings, cotyledons, leaves, hypocotyls and roots.

Its subcellular location is the peroxisome. It catalyses the reaction (9S,13S,15Z)-12-oxophyto-10,15-dienoate + ATP + CoA = (10Z,15Z)-12-oxophytodienoyl-CoA + AMP + diphosphate. It carries out the reaction (1S,2S)-OPC-8 + ATP + CoA = OPC8-CoA + AMP + diphosphate. The enzyme catalyses hexadecanoate + ATP + CoA = hexadecanoyl-CoA + AMP + diphosphate. The catalysed reaction is (9Z)-octadecenoate + ATP + CoA = (9Z)-octadecenoyl-CoA + AMP + diphosphate. It catalyses the reaction tetradecanoate + ATP + CoA = tetradecanoyl-CoA + AMP + diphosphate. It carries out the reaction decanoate + ATP + CoA = decanoyl-CoA + AMP + diphosphate. The enzyme catalyses dodecanoate + ATP + CoA = dodecanoyl-CoA + AMP + diphosphate. The catalysed reaction is octadecanoate + ATP + CoA = octadecanoyl-CoA + AMP + diphosphate. It catalyses the reaction OPC-6 + ATP + CoA = OPC-6-CoA + AMP + diphosphate. It carries out the reaction dinor-OPDA + ATP + CoA = dinor-OPDA-CoA + AMP + diphosphate. Its function is as follows. Contributes to jasmonic acid biosynthesis by initiating the beta-oxidative chain shortening of its precursors. Converts 12-oxo-phytodienoic acid (OPDA) and 3-oxo-2-(2'-pentenyl)-cyclopentane-1-octanoic acid (OPC-8:0) into OPDA-CoA and OPC-8:0-CoA, respectively. Follows a two-step reaction mechanism, wherein the carboxylate substrate first undergoes adenylation by ATP, followed by a thioesterification in the presence of CoA to yield the final CoA thioester. The chain is Peroxisomal OPC-8:0-CoA ligase 1 from Arabidopsis thaliana (Mouse-ear cress).